The chain runs to 279 residues: uncharacterized protein (279 aa).

This sequence to M.tuberculosis Rv2569c.

This is an uncharacterized protein from Mycobacterium leprae (strain TN).